Here is a 79-residue protein sequence, read N- to C-terminus: MAEEGDVDEADVFLAFAQGPSPPRGPVRRALDKAFFIFLALFLTLLMLEAAYKLLWLLLWAKLGDWLLGTPQKEEELEL.

A helical membrane pass occupies residues 35–55 (FFIFLALFLTLLMLEAAYKLL).

It is found in the membrane. In Homo sapiens (Human), this protein is Small integral membrane protein 40.